The sequence spans 404 residues: Pectate lyase E (404 aa).

The first 41 residues, 1-41 (MNNSRMSSVSTQKTTGRSALGTKSALAAIIATTMMVSVASA), serve as a signal peptide directing secretion. Positions 182 and 225 each coordinate Ca(2+). Arginine 278 is an active-site residue.

It belongs to the polysaccharide lyase 1 family. PLBC subfamily. Requires Ca(2+) as cofactor.

It is found in the secreted. It carries out the reaction Eliminative cleavage of (1-&gt;4)-alpha-D-galacturonan to give oligosaccharides with 4-deoxy-alpha-D-galact-4-enuronosyl groups at their non-reducing ends.. Its pathway is glycan metabolism; pectin degradation; 2-dehydro-3-deoxy-D-gluconate from pectin: step 2/5. Functionally, involved in maceration and soft-rotting of plant tissue. Pectate lyases have been implicated as pathogenicity factors which induce maceration or rotting of plant tissue. PelE is sufficient to induce these effects under laboratory conditions. This Dickeya chrysanthemi (Pectobacterium chrysanthemi) protein is Pectate lyase E (pelE).